The following is a 321-amino-acid chain: Nucleus-vacuole junction protein 1 (321 aa).

The signal sequence occupies residues 1–22; that stretch reads MTRPPLVRGIFSLGLSVAVLKG. A TSC13-binding region spans residues 73 to 125; that stretch reads ELSWRKVFNFISRQSSELDTRIYVLILLLSFLLPIAWTVLDGDRETTLEDKDN. The chain crosses the membrane as a helical span at residues 94-114; sequence IYVLILLLSFLLPIAWTVLDG. The tract at residues 139–195 is OSH1-binding; that stretch reads KHYNDGERAVLQFGKNRSEPIILSYKDMNVLEGEHEFTSKEEHSNSHLTSKSENALN. Phosphoserine is present on residues serine 156 and serine 199. Residues 211-275 form a disordered region; the sequence is LEEDKNEPNG…SLKSSTSFPI (65 aa). The VAC8-binding stretch occupies residues 233 to 321; that stretch reads DCSSSSEVES…EQAYSQPFRY (89 aa). A compositionally biased stretch (basic and acidic residues) spans 242–262; that stretch reads SQSKCRKESTAEPDSLSRDTR. Over residues 263 to 272 the composition is skewed to low complexity; the sequence is TTSSLKSSTS. Serine 285 and serine 298 each carry phosphoserine. Positions 299–321 are disordered; sequence PTKSSNLDAQVNTEQAYSQPFRY.

Interacts with OSH1, TSC13 and VAC8.

Its subcellular location is the nucleus outer membrane. Functionally, involved in the formation of nucleus-vacuole junctions (NVJs) during piecemeal microautophagy of the nucleus (PMN). NVJs are interorganelle interfaces mediated by NVJ1 in the nuclear envelope and VAC8 on the vacuole membrane. Together, NVJ1 and VAC8 form Velcro-like patches through which teardrop-like portions of the nucleus are pinched off into the vacuolar lumen and degraded by the PMN process. Also acts as an outer-nuclear membrane receptor for OSH1 and TSC13. In Saccharomyces cerevisiae (strain ATCC 204508 / S288c) (Baker's yeast), this protein is Nucleus-vacuole junction protein 1 (NVJ1).